Here is a 199-residue protein sequence, read N- to C-terminus: Tropomyosin-1 (199 aa).

The stretch at 1–199 forms a coiled coil; that stretch reads MDKIREKLSN…DEIAASLENL (199 aa). Glycyl lysine isopeptide (Lys-Gly) (interchain with G-Cter in ubiquitin) cross-links involve residues Lys39 and Lys59. Disordered stretches follow at residues 59-81 and 102-147; these read KLEAGLSDSKQTEQDNVEKENQI and LAES…TEKL. Composition is skewed to basic and acidic residues over residues 68 to 80 and 102 to 114; these read KQTEQDNVEKENQ and LAESKQLSEDSHH. The segment covering 115–126 has biased composition (polar residues); the sequence is LQSNNDNFSKKN. The segment covering 136-147 has biased composition (basic and acidic residues); that stretch reads SDTKLKETTEKL. A Glycyl lysine isopeptide (Lys-Gly) (interchain with G-Cter in ubiquitin) cross-link involves residue Lys187. A Phosphoserine modification is found at Ser195.

As to quaternary structure, homodimer.

It localises to the cytoplasm. The protein localises to the cytoskeleton. The polypeptide is Tropomyosin-1 (TPM1) (Saccharomyces cerevisiae (strain ATCC 204508 / S288c) (Baker's yeast)).